We begin with the raw amino-acid sequence, 280 residues long: Cell envelope integrity protein EipB (280 aa).

The signal sequence occupies residues 1–24 (MRFVRIAAAASGATVFMWAGFAGA). An intrachain disulfide couples cysteine 69 to cysteine 278.

As to quaternary structure, monomer.

It is found in the periplasm. Functionally, functions in the periplasm to maintain cell envelope integrity. The protein is Cell envelope integrity protein EipB of Brucella abortus (strain 2308).